We begin with the raw amino-acid sequence, 305 residues long: 3-methyl-2-oxobutanoate hydroxymethyltransferase (305 aa).

Positions 52 and 95 each coordinate Mg(2+). Residues 52-53 (DS), aspartate 95, and lysine 125 contribute to the 3-methyl-2-oxobutanoate site. Glutamate 127 serves as a coordination point for Mg(2+). Catalysis depends on glutamate 194, which acts as the Proton acceptor.

This sequence belongs to the PanB family. As to quaternary structure, homodecamer; pentamer of dimers. Mg(2+) is required as a cofactor.

The protein localises to the cytoplasm. The enzyme catalyses 3-methyl-2-oxobutanoate + (6R)-5,10-methylene-5,6,7,8-tetrahydrofolate + H2O = 2-dehydropantoate + (6S)-5,6,7,8-tetrahydrofolate. The protein operates within cofactor biosynthesis; (R)-pantothenate biosynthesis; (R)-pantoate from 3-methyl-2-oxobutanoate: step 1/2. Catalyzes the reversible reaction in which hydroxymethyl group from 5,10-methylenetetrahydrofolate is transferred onto alpha-ketoisovalerate to form ketopantoate. This chain is 3-methyl-2-oxobutanoate hydroxymethyltransferase, found in Anaeromyxobacter sp. (strain Fw109-5).